The primary structure comprises 397 residues: Heterogeneous nuclear ribonucleoprotein K homolog (397 aa).

The interval methionine 1–phenylalanine 41 is disordered. Residues lysine 16–threonine 30 show a composition bias toward basic and acidic residues. 2 consecutive KH domains span residues lysine 49–valine 111 and proline 124–valine 189. Residues glycine 220–glycine 279 are disordered. The span at glycine 224–arginine 241 shows a compositional bias: low complexity. Positions valine 316 to leucine 379 constitute a KH 3 domain.

Interacts with alg-1; the interaction is direct and may be strengthened through RNA-protein association. As to expression, expressed in gut, muscle, neuronal and hypodermal tissues. Highly expressed in the germline and oocytes.

It is found in the nucleus. It localises to the cytoplasm. Its function is as follows. RNA-binding protein which functions together with alg-1, a component of the miRNA loading complex, to modulate the processing and activity of specific miRNAs such as miR-58 and let-7 to regulate gene expression at the post-transcriptional level during embryonic, hypodermal and neuronal development. Promotes the lsy-6-mediated repression of cog-1 in uterine cells. In embryos, may play a role in the DNA damage response. The sequence is that of Heterogeneous nuclear ribonucleoprotein K homolog from Caenorhabditis elegans.